A 909-amino-acid chain; its full sequence is Aconitate hydratase A (909 aa).

[4Fe-4S] cluster-binding residues include Cys-450, Cys-516, and Cys-519.

This sequence belongs to the aconitase/IPM isomerase family. As to quaternary structure, monomer. [4Fe-4S] cluster serves as cofactor.

The catalysed reaction is citrate = D-threo-isocitrate. It catalyses the reaction 3-hydroxybutane-1,2,3-tricarboxylate = 2-methyl-cis-aconitate + H2O. It participates in carbohydrate metabolism; tricarboxylic acid cycle; isocitrate from oxaloacetate: step 2/2. In terms of biological role, involved in both the tricarboxylic acid (TCA) and methylcitric acid cycles. Catalyzes the reversible isomerization of citrate to isocitrate via cis-aconitate. Also catalyzes the rehydration of 2-methyl-cis-aconitate to produce 2-methylisocitrate. The apo form of AcnA functions as a RNA-binding regulatory protein which plays a role in the regulation of citrate concentration and in the sporulation. To prevent the accumulation of excessive levels of citrate, it binds near the 5' end of the citZ mRNA, decreasing its stability and thereby limiting the concentration of citrate synthase in the cell. Aconitase also binds to the gerE transcript late in sporulation and stabilizes it for translation, thereby increasing the rate and level of GerE protein accumulation. This Bacillus subtilis (strain 168) protein is Aconitate hydratase A (citB).